The chain runs to 167 residues: Endoribonuclease YbeY (167 aa).

Zn(2+) contacts are provided by H132, H136, and H142.

The protein belongs to the endoribonuclease YbeY family. Zn(2+) serves as cofactor.

The protein localises to the cytoplasm. Functionally, single strand-specific metallo-endoribonuclease involved in late-stage 70S ribosome quality control and in maturation of the 3' terminus of the 16S rRNA. In Clostridium tetani (strain Massachusetts / E88), this protein is Endoribonuclease YbeY.